The primary structure comprises 100 residues: NADH-quinone oxidoreductase subunit K (100 aa).

3 helical membrane passes run 2-22 (ISLNHYLLLCVILFCIGLFGI), 28-48 (ILMLFFSTEILLNAINIGFVA), and 63-83 (LFIIAIAASEIAVGLGLVVIW).

It belongs to the complex I subunit 4L family. NDH-1 is composed of 14 different subunits. Subunits NuoA, H, J, K, L, M, N constitute the membrane sector of the complex.

It is found in the cell inner membrane. The enzyme catalyses a quinone + NADH + 5 H(+)(in) = a quinol + NAD(+) + 4 H(+)(out). NDH-1 shuttles electrons from NADH, via FMN and iron-sulfur (Fe-S) centers, to quinones in the respiratory chain. The immediate electron acceptor for the enzyme in this species is believed to be ubiquinone. Couples the redox reaction to proton translocation (for every two electrons transferred, four hydrogen ions are translocated across the cytoplasmic membrane), and thus conserves the redox energy in a proton gradient. In Helicobacter hepaticus (strain ATCC 51449 / 3B1), this protein is NADH-quinone oxidoreductase subunit K.